The sequence spans 349 residues: Homoserine O-succinyltransferase (349 aa).

The active-site Acyl-thioester intermediate is C146. The substrate site is built by K167 and S196. H239 functions as the Proton acceptor in the catalytic mechanism. E241 is an active-site residue. Position 253 (R253) interacts with substrate.

This sequence belongs to the MetA family.

The protein resides in the cytoplasm. The catalysed reaction is L-homoserine + succinyl-CoA = O-succinyl-L-homoserine + CoA. The protein operates within amino-acid biosynthesis; L-methionine biosynthesis via de novo pathway; O-succinyl-L-homoserine from L-homoserine: step 1/1. Transfers a succinyl group from succinyl-CoA to L-homoserine, forming succinyl-L-homoserine. In vitro, can also use glutaryl-CoA as acyl donor. The polypeptide is Homoserine O-succinyltransferase (Thiobacillus denitrificans (strain ATCC 25259 / T1)).